The sequence spans 189 residues: Glycerol-3-phosphate acyltransferase (189 aa).

5 helical membrane-spanning segments follow: residues Met-1–Leu-21, Lys-50–Ala-70, Leu-77–Phe-97, Met-111–Phe-131, and Leu-151–Val-171.

This sequence belongs to the PlsY family. In terms of assembly, probably interacts with PlsX.

It is found in the cell inner membrane. The catalysed reaction is an acyl phosphate + sn-glycerol 3-phosphate = a 1-acyl-sn-glycero-3-phosphate + phosphate. It participates in lipid metabolism; phospholipid metabolism. Its function is as follows. Catalyzes the transfer of an acyl group from acyl-phosphate (acyl-PO(4)) to glycerol-3-phosphate (G3P) to form lysophosphatidic acid (LPA). This enzyme utilizes acyl-phosphate as fatty acyl donor, but not acyl-CoA or acyl-ACP. This is Glycerol-3-phosphate acyltransferase from Pseudomonas putida (strain ATCC 47054 / DSM 6125 / CFBP 8728 / NCIMB 11950 / KT2440).